Consider the following 570-residue polypeptide: MHRHILILFLFGCLSADQRLSSTSISSMNGFSTTRKCEHITIPMCKNLDYNQTVFPNLLGHTTQSEAGPAIAQFNPLIKVKCSEDIRLFLCTVYAPVCTVLEKPIQPCRELCLSAKNGCESLMKKFGFQWPDQLDCNKFPVTDLCVGKNSSESSNSKNYRSSNDVTFGVSTIANEVVLSPKKCPHHMHTTSGSHFSLPLLSGRLPECSLTCEADNQVPMMFDGRVRRILRIWTAAWSVACFVCSLFTLVTFLVDLSRFAYPVRPILYLAFCYLAISTVYMIGVVGEDGFACGTYGSTPTTLVTQGGENVGCSALAVVHYFFFMSSCAWWLVLCLAWFLAANLKWGAESIAALSPYFHAMCWGVPAVLSVTVLVTNSVDGDVFTGICSVGNLNPSALVYFFFTPIVVSLALGAVLLVCGIWSMIRIRSYIKLQHADVERNISKLEKLMLRIGAFAIMYSLPTAMNAAIMWYQAVNMPAWLEGWLHHRCVRLQDRELFGFTYPVDDCPMDPKVAAPEIIVFLLKYVSQLVVGITCAIWVVSSKTLSSYHKAYLALSSRSPTVPAHVDQVNMR.

Residues 1–16 form the signal peptide; it reads MHRHILILFLFGCLSA. At 17–230 the chain is on the extracellular side; sequence DQRLSSTSIS…FDGRVRRILR (214 aa). The FZ domain occupies 32–148; it reads STTRKCEHIT…FPVTDLCVGK (117 aa). 5 cysteine pairs are disulfide-bonded: Cys-37-Cys-98, Cys-45-Cys-91, Cys-82-Cys-119, Cys-108-Cys-145, and Cys-112-Cys-136. Asn-51 carries N-linked (GlcNAc...) asparagine glycosylation. The N-linked (GlcNAc...) asparagine glycan is linked to Asn-149. Residues 231-251 traverse the membrane as a helical segment; that stretch reads IWTAAWSVACFVCSLFTLVTF. The Cytoplasmic segment spans residues 252-264; it reads LVDLSRFAYPVRP. The chain crosses the membrane as a helical span at residues 265–285; that stretch reads ILYLAFCYLAISTVYMIGVVG. Residues 286–319 lie on the Extracellular side of the membrane; it reads EDGFACGTYGSTPTTLVTQGGENVGCSALAVVHY. A helical transmembrane segment spans residues 320-340; sequence FFFMSSCAWWLVLCLAWFLAA. Residues 341 to 348 lie on the Cytoplasmic side of the membrane; the sequence is NLKWGAES. Residues 349-369 traverse the membrane as a helical segment; that stretch reads IAALSPYFHAMCWGVPAVLSV. Topologically, residues 370–395 are extracellular; sequence TVLVTNSVDGDVFTGICSVGNLNPSA. The helical transmembrane segment at 396–416 threads the bilayer; sequence LVYFFFTPIVVSLALGAVLLV. The Cytoplasmic segment spans residues 417-449; sequence CGIWSMIRIRSYIKLQHADVERNISKLEKLMLR. The chain crosses the membrane as a helical span at residues 450-470; it reads IGAFAIMYSLPTAMNAAIMWY. Topologically, residues 471 to 515 are extracellular; the sequence is QAVNMPAWLEGWLHHRCVRLQDRELFGFTYPVDDCPMDPKVAAPE. Residues 516–536 form a helical membrane-spanning segment; it reads IIVFLLKYVSQLVVGITCAIW. Over 537-570 the chain is Cytoplasmic; that stretch reads VVSSKTLSSYHKAYLALSSRSPTVPAHVDQVNMR.

This sequence belongs to the G-protein coupled receptor Fz/Smo family.

It localises to the cell membrane. The protein localises to the early endosome. In terms of biological role, receptor for Wnt proteins. Most frizzled receptors are coupled to the beta-catenin canonical signaling pathway, which leads to the activation of disheveled proteins, inhibition of gsk-3 kinase, nuclear accumulation of beta-catenin and activation of Wnt target genes. A second signaling pathway involving PKC and calcium fluxes has been seen for some family members, but it is not yet clear if it represents a distinct pathway or if it can be integrated in the canonical pathway, as pkc seems to be required for Wnt-mediated inactivation of gsk-3 kinase. Both pathways seem to involve interactions with G-proteins. Required in embryonic development for the correct positioning and orientation of the mitotic spindles and division planes in blastomere cells. During early embryonic cell divisions, directs the asymmetric positioning of transcription factors such as pop-1 and dsh-2 in daughter cells in order to determine cell fate specification. Acts redundantly with other Wnt receptors such as lin-17 to control vulval precursor cell specification and also the polarity of different cell types including distal tip cells, seam cells, AVG interneurons and P-cells and their descendants. Plays a role in the migration of cell types including distal tip cells and the QR neuroblast descendants, QR.p and QR.pa during larval development. Negatively regulates the unc-6/Netrin receptors unc-5 and unc-40 to control distal tip cell polarity and migration. Acts through ced-5/DOCK180 and ced-10/Rac to control both distal tip cell migration and the phagocytic clearance of apoptotic cell corpses. Furthermore, it is also required for the migration and axon guidance of the different neuronal cell types including CAN, ALM, HSN and the two mechanosensory neurons AVM and PVM. Mediates Wnt receptor cfz-2 in directing ALM migration, but may also act redundantly with the Wnt receptors cfz-2 and mig-1 to direct the migration of other neuronal cell types including CAN and HSN. Mediates Wnt ligand egl-20 in the control of the anterior-posterior axon guidance of AVM and PVM neurons. This is Protein mom-5 from Caenorhabditis elegans.